Here is a 294-residue protein sequence, read N- to C-terminus: Phosphatidylserine decarboxylase proenzyme (294 aa).

Catalysis depends on charge relay system; for autoendoproteolytic cleavage activity residues D113, H169, and S256. The Schiff-base intermediate with substrate; via pyruvic acid; for decarboxylase activity role is filled by S256. At S256 the chain carries Pyruvic acid (Ser); by autocatalysis.

This sequence belongs to the phosphatidylserine decarboxylase family. PSD-B subfamily. Prokaryotic type II sub-subfamily. As to quaternary structure, heterodimer of a large membrane-associated beta subunit and a small pyruvoyl-containing alpha subunit. The cofactor is pyruvate. Post-translationally, is synthesized initially as an inactive proenzyme. Formation of the active enzyme involves a self-maturation process in which the active site pyruvoyl group is generated from an internal serine residue via an autocatalytic post-translational modification. Two non-identical subunits are generated from the proenzyme in this reaction, and the pyruvate is formed at the N-terminus of the alpha chain, which is derived from the carboxyl end of the proenzyme. The autoendoproteolytic cleavage occurs by a canonical serine protease mechanism, in which the side chain hydroxyl group of the serine supplies its oxygen atom to form the C-terminus of the beta chain, while the remainder of the serine residue undergoes an oxidative deamination to produce ammonia and the pyruvoyl prosthetic group on the alpha chain. During this reaction, the Ser that is part of the protease active site of the proenzyme becomes the pyruvoyl prosthetic group, which constitutes an essential element of the active site of the mature decarboxylase.

The protein resides in the cell membrane. The catalysed reaction is a 1,2-diacyl-sn-glycero-3-phospho-L-serine + H(+) = a 1,2-diacyl-sn-glycero-3-phosphoethanolamine + CO2. The protein operates within phospholipid metabolism; phosphatidylethanolamine biosynthesis; phosphatidylethanolamine from CDP-diacylglycerol: step 2/2. In terms of biological role, catalyzes the formation of phosphatidylethanolamine (PtdEtn) from phosphatidylserine (PtdSer). The protein is Phosphatidylserine decarboxylase proenzyme of Clostridium perfringens (strain ATCC 13124 / DSM 756 / JCM 1290 / NCIMB 6125 / NCTC 8237 / Type A).